The chain runs to 628 residues: Chaperone protein HtpG (628 aa).

Residues 1-337 (MSEKKYTFET…SADLPLNVSR (337 aa)) are a; substrate-binding. The segment at 338–554 (EILQHNKVID…DYGMSLHMQK (217 aa)) is b. Residues 555-628 (MMEEAGQGFM…FVKLVNKYIR (74 aa)) are c.

Belongs to the heat shock protein 90 family. In terms of assembly, homodimer.

The protein resides in the cytoplasm. In terms of biological role, molecular chaperone. Has ATPase activity. The chain is Chaperone protein HtpG from Francisella tularensis subsp. novicida (strain U112).